The sequence spans 717 residues: PAN2-PAN3 deadenylation complex subunit PAN3 (717 aa).

Residues Trp-8–Asp-37 form a C3H1-type zinc finger. The segment at Asp-37 to Lys-100 is disordered. Low complexity predominate over residues Pro-62–Ala-90. Over residues His-91 to Lys-100 the composition is skewed to polar residues. A pseudokinase domain region spans residues Gln-323 to Leu-585. ATP is bound by residues Arg-378, Asp-428–Ser-435, and Asp-482–Lys-483. A coiled-coil region spans residues Asp-586–Phe-624. A knob domain region spans residues Ile-625–Leu-717.

The protein belongs to the protein kinase superfamily. PAN3 family. As to quaternary structure, homodimer. Forms a heterotrimer with a catalytic subunit PAN2 to form the poly(A)-nuclease (PAN) deadenylation complex. Interacts (via PAM-2 motif) with poly(A)-binding protein PAB1 (via PABC domain), conferring substrate specificity of the enzyme complex.

The protein resides in the cytoplasm. In terms of biological role, regulatory subunit of the poly(A)-nuclease (PAN) deadenylation complex, one of two cytoplasmic mRNA deadenylases involved in mRNA turnover. PAN specifically shortens poly(A) tails of RNA and the activity is stimulated by poly(A)-binding protein PAB1. PAN deadenylation is followed by rapid degradation of the shortened mRNA tails by the CCR4-NOT complex. Deadenylated mRNAs are then degraded by two alternative mechanisms, namely exosome-mediated 3'-5' exonucleolytic degradation, or deadenylation-dependent mRNA decaping and subsequent 5'-3' exonucleolytic degradation by XRN1. May also be involved in post-transcriptional maturation of mRNA poly(A) tails. PAN3 acts as a positive regulator for PAN activity, recruiting the catalytic subunit PAN2 to mRNA via its interaction with RNA and with PAB1. This Candida glabrata (strain ATCC 2001 / BCRC 20586 / JCM 3761 / NBRC 0622 / NRRL Y-65 / CBS 138) (Yeast) protein is PAN2-PAN3 deadenylation complex subunit PAN3.